A 61-amino-acid chain; its full sequence is MRAMSSQRIEGEKIRCVGRRISKPRLIHQTGKHRAIEIFVEGRPAKAEVVRAWRVLKTAED.

This is an uncharacterized protein from Archaeoglobus fulgidus (strain ATCC 49558 / DSM 4304 / JCM 9628 / NBRC 100126 / VC-16).